Consider the following 559-residue polypeptide: MEGEERKGEAGPGPGRLSALQEQLIWALLGSGLSREVLVHALGELERERVTPGAEKGDRGDGESSEEGEMDFPPPIFQELEALAPEEAARQRALVDQLLQEDPWRVAKLVKSYMQQHNLPQREVVESIGLNQSHLSQHLNKGTPMKNQKRAALYSWYVRKQGEISQQFTNARHALGSGEEQGEDVRKGRRNRFKWGPASQQILFHAYERQRNPSKEEREGLVEECNRAECLQRGVSPSQLAGLGSNLVTEVRVYNWFANRRKEEAFRHKLALDMPYNSQSASSTNHTLSHSPEQGMKYSQQITCDNLGSSRGHNGDRGLGGRLASPIQLEPSHTLLETHHHKPVSGGGPLPPVSTLTSLHSLSASPAPHHGLIMTSLPSVMSLGESSLLIGQTVPVINNVGGGFTTLQPISFQQQLHSTSQQQLTQQFQSHMGHHHSPFMATMAQLPCHMYSKSDMSHYPPSSLLSQAMVITDSSSLGTLTSLTTVRQILTTDPEEQTDQPIQEDSLHLQSPSPVPVSSGNLQLYPPSQSSESHPPHRLSSSPADINSYIPAQMVSTAQ.

In terms of domain architecture, HNF-p1 spans 13-44 (GPGRLSALQEQLIWALLGSGLSREVLVHALGE). A dimerization region spans residues 14–43 (PGRLSALQEQLIWALLGSGLSREVLVHALG). Residues 49-62 (RVTPGAEKGDRGDG) are compositionally biased toward basic and acidic residues. The segment at 49–73 (RVTPGAEKGDRGDGESSEEGEMDFP) is disordered. The POU-specific atypical domain occupies 78 to 173 (QELEALAPEE…ISQQFTNARH (96 aa)). Interaction with DNA regions lie at residues 121-123 (QRE), 134-140 (HLSQHLN), 146-149 (KNQK), 192-195 (RFKW), 252-254 (RVY), and 259-262 (NRRK). A Nuclear localization signal motif is present at residues 186 to 194 (RKGRRNRFK). Positions 188-268 (GRRNRFKWGP…NRRKEEAFRH (81 aa)) form a DNA-binding region, homeobox; HNF1-type. Residues 492 to 559 (TDPEEQTDQP…IPAQMVSTAQ (68 aa)) form a disordered region. A compositionally biased stretch (polar residues) spans 499–522 (DQPIQEDSLHLQSPSPVPVSSGNL).

This sequence belongs to the HNF1 homeobox family. In terms of assembly, binds DNA as a dimer. Expressed in liver, intestine, spleen and kidney.

The protein localises to the nucleus. Its function is as follows. Transcriptional activator that regulates the tissue specific expression of multiple genes, especially in pancreas and liver. Binds to the promoter of the albumin gene. The protein is Hepatocyte nuclear factor 1-alpha (hnf1a) of Salmo salar (Atlantic salmon).